The sequence spans 554 residues: Kinesin-like protein 3 (554 aa).

The 323-residue stretch at S3–I325 folds into the Kinesin motor domain. ATP-binding positions include G84–T91 and G233–S240. Residues L446–N473 are a coiled coil.

This sequence belongs to the TRAFAC class myosin-kinesin ATPase superfamily. Kinesin family.

The protein resides in the cytoplasm. The protein localises to the cytoskeleton. Its function is as follows. Cytoplasmic motor that could play a role in Golgi membrane recycling. This is Kinesin-like protein 3 (klp3) from Schizosaccharomyces pombe (strain 972 / ATCC 24843) (Fission yeast).